Consider the following 279-residue polypeptide: Shikimate dehydrogenase (NADP(+)) (279 aa).

Shikimate-binding positions include 17-19 and Thr-64; that span reads SLS. Lys-68 functions as the Proton acceptor in the catalytic mechanism. Residue Asp-80 participates in NADP(+) binding. Residues Asn-89 and Asp-105 each coordinate shikimate. NADP(+)-binding positions include 129–133, 153–158, and Leu-221; these read GAGGS and NRTAKK. Tyr-223 serves as a coordination point for shikimate. Gly-245 is a binding site for NADP(+).

It belongs to the shikimate dehydrogenase family. In terms of assembly, homodimer.

The enzyme catalyses shikimate + NADP(+) = 3-dehydroshikimate + NADPH + H(+). The protein operates within metabolic intermediate biosynthesis; chorismate biosynthesis; chorismate from D-erythrose 4-phosphate and phosphoenolpyruvate: step 4/7. Functionally, involved in the biosynthesis of the chorismate, which leads to the biosynthesis of aromatic amino acids. Catalyzes the reversible NADPH linked reduction of 3-dehydroshikimate (DHSA) to yield shikimate (SA). The protein is Shikimate dehydrogenase (NADP(+)) of Idiomarina loihiensis (strain ATCC BAA-735 / DSM 15497 / L2-TR).